A 594-amino-acid polypeptide reads, in one-letter code: Pentatricopeptide repeat-containing protein At1g15480, mitochondrial (594 aa).

The transit peptide at 1 to 67 (MFALSKVLRR…WSSSTGRRSL (67 aa)) directs the protein to the mitochondrion. Over residues 62-75 (TGRRSLSSDAGAKT) the composition is skewed to low complexity. A disordered region spans residues 62 to 109 (TGRRSLSSDAGAKTTGDDDDLEDKNVDLATPDETSSDSEDGEEFSGDE). The segment covering 95–109 (TSSDSEDGEEFSGDE) has biased composition (acidic residues). PPR repeat units follow at residues 226-260 (GELV…GFPL), 261-294 (STFT…NLKP), 295-329 (NLNT…GVEL), 330-364 (DLRA…SLEE), 432-466 (SSNV…GCNI), 467-502 (GALT…QIKP), and 503-537 (LMSS…GYQS).

Belongs to the PPR family. P subfamily.

Its subcellular location is the mitochondrion. This is Pentatricopeptide repeat-containing protein At1g15480, mitochondrial from Arabidopsis thaliana (Mouse-ear cress).